Consider the following 419-residue polypeptide: eIF5-mimic protein 2 (419 aa).

An N-acetylmethionine modification is found at Met1. Positions 1 to 15 (MNNQKQQKPTLSGQR) are enriched in polar residues. The tract at residues 1-26 (MNNQKQQKPTLSGQRFKTRKRDEKER) is disordered. Ser12 carries the post-translational modification Phosphoserine. Positions 247-414 (NQQTIGARKE…KNAEEESESE (168 aa)) constitute a W2 domain. A Glycyl lysine isopeptide (Lys-Gly) (interchain with G-Cter in SUMO2) cross-link involves residue Lys368. Ser411 and Ser413 each carry phosphoserine.

It belongs to the BZW family.

Translation initiation regulator which represses repeat-associated non-AUG (RAN) initiated translation probably by acting as a competitive inhibitor of eukaryotic translation initiation factor 5 (EIF5) function. Enhances histone H4 gene transcription but does not seem to bind DNA directly. The sequence is that of eIF5-mimic protein 2 (BZW1) from Pongo abelii (Sumatran orangutan).